The sequence spans 150 residues: UPF0178 protein PP_5221 (150 aa).

The protein belongs to the UPF0178 family.

The chain is UPF0178 protein PP_5221 from Pseudomonas putida (strain ATCC 47054 / DSM 6125 / CFBP 8728 / NCIMB 11950 / KT2440).